We begin with the raw amino-acid sequence, 156 residues long: uncharacterized protein (156 aa).

Helical transmembrane passes span 46–66 (GLVLWVMAGLGFALGDFAGVV) and 114–134 (IIDILLAWTSFLLIISGIVAL).

It localises to the cell membrane. This is an uncharacterized protein from Haemophilus influenzae (strain ATCC 51907 / DSM 11121 / KW20 / Rd).